Reading from the N-terminus, the 87-residue chain is Small ribosomal subunit protein uS15 (87 aa).

Belongs to the universal ribosomal protein uS15 family. In terms of assembly, part of the 30S ribosomal subunit. Forms a bridge to the 50S subunit in the 70S ribosome, contacting the 23S rRNA.

One of the primary rRNA binding proteins, it binds directly to 16S rRNA where it helps nucleate assembly of the platform of the 30S subunit by binding and bridging several RNA helices of the 16S rRNA. In terms of biological role, forms an intersubunit bridge (bridge B4) with the 23S rRNA of the 50S subunit in the ribosome. In Clostridium kluyveri (strain NBRC 12016), this protein is Small ribosomal subunit protein uS15.